The chain runs to 299 residues: RING-H2 finger protein ATL20 (299 aa).

A helical membrane pass occupies residues 172–192 (LIITLCIIGGITATCIAAIRI). The RING-type; atypical zinc-finger motif lies at 253-295 (CPICLSEYASKETVRCMPECDHCFHVQCIDEWLKIHSSCPVCR).

Belongs to the RING-type zinc finger family. ATL subfamily.

The protein localises to the membrane. It catalyses the reaction S-ubiquitinyl-[E2 ubiquitin-conjugating enzyme]-L-cysteine + [acceptor protein]-L-lysine = [E2 ubiquitin-conjugating enzyme]-L-cysteine + N(6)-ubiquitinyl-[acceptor protein]-L-lysine.. It participates in protein modification; protein ubiquitination. The protein is RING-H2 finger protein ATL20 (ATL20) of Arabidopsis thaliana (Mouse-ear cress).